The primary structure comprises 152 residues: MSLRPCFVSLIDESDKPILIYVPNEAENEMNDVLKYNVLSNISLDYFESALVEWHSLDSKPLLKSIFQLEGVSVFAMLIKQTGLKIVIGFEQKSLSGADDEFEAINQIFETVRKIYIRVKCNPLLVSGDEKSIIKSLERKFDELFISTEVEL.

The protein belongs to the TRAPP small subunits family. Sedlin subfamily. Interacts with the TRAPP II complex; TRAPP II subunits TRS33 and TRS65 are required for this interaction.

Its subcellular location is the golgi apparatus. The protein localises to the trans-Golgi network. Required, together with the TRAPP II subunit TRS33, for TRAPP II complex assembly or stability, and for proper Golgi localization of TRAPP and the Rab GTPase YPT31. This is TRAPP-associated protein TCA17 (TCA17) from Saccharomyces cerevisiae (strain ATCC 204508 / S288c) (Baker's yeast).